Reading from the N-terminus, the 195-residue chain is Thymidine kinase (195 aa).

ATP is bound by residues 15–22 (GSMFSGKT) and 91–94 (DEAN). E92 acts as the Proton acceptor in catalysis. Zn(2+) is bound by residues C148, C151, C186, and C189.

The protein belongs to the thymidine kinase family. In terms of assembly, homotetramer.

It is found in the cytoplasm. It carries out the reaction thymidine + ATP = dTMP + ADP + H(+). The polypeptide is Thymidine kinase (Halobacterium salinarum (strain ATCC 29341 / DSM 671 / R1)).